The primary structure comprises 79 residues: Major outer membrane lipoprotein Lpp 2 (79 aa).

Positions Met-1–Gly-21 are cleaved as a signal peptide. A lipid anchor (N-palmitoyl cysteine) is attached at Cys-22. The S-diacylglycerol cysteine moiety is linked to residue Cys-22. 2 repeats span residues Asn-25–Val-35 and Ser-39–Val-49. Positions Ile-28–Arg-76 form a coiled coil. Residues Lys-60–Lys-79 form a disordered region. Lys-79 carries the post-translational modification N6-murein peptidoglycan lysine.

Belongs to the Lpp family. In terms of assembly, homotrimer.

Its subcellular location is the cell outer membrane. The protein resides in the secreted. It is found in the cell wall. In terms of biological role, a highly abundant outer membrane lipoprotein that controls the distance between the inner and outer membranes. The only protein known to be covalently linked to the peptidoglycan network (PGN). Also non-covalently binds the PGN. The link between the cell outer membrane and PGN contributes to maintenance of the structural and functional integrity of the cell envelope, and maintains the correct distance between the PGN and the outer membrane. In Salmonella paratyphi A (strain ATCC 9150 / SARB42), this protein is Major outer membrane lipoprotein Lpp 2.